We begin with the raw amino-acid sequence, 349 residues long: FK506-binding protein-like (349 aa).

T3 carries the post-translational modification Phosphothreonine. The disordered stretch occupies residues 36–55; the sequence is RQQPRDPPTETLELEVSPDP. TPR repeat units lie at residues 210–243, 252–285, and 286–319; these read AREE…LLTL, TVLH…EPGH, and LKAL…DPKN.

Forms a ternary complex with CDKN1A/p21 and HSP90AB1/Hsp90. Ubiquitously expressed with higher levels in testis.

Its function is as follows. May be involved in response to X-ray. Regulates p21 protein stability by binding to Hsp90 and p21. The polypeptide is FK506-binding protein-like (FKBPL) (Homo sapiens (Human)).